A 227-amino-acid chain; its full sequence is tRNA (guanine-N(1)-)-methyltransferase (227 aa).

Residues glycine 111 and 135-140 contribute to the S-adenosyl-L-methionine site; that span reads LGDYVL.

Belongs to the RNA methyltransferase TrmD family. As to quaternary structure, homodimer.

It is found in the cytoplasm. The catalysed reaction is guanosine(37) in tRNA + S-adenosyl-L-methionine = N(1)-methylguanosine(37) in tRNA + S-adenosyl-L-homocysteine + H(+). Functionally, specifically methylates guanosine-37 in various tRNAs. The polypeptide is tRNA (guanine-N(1)-)-methyltransferase (Leifsonia xyli subsp. xyli (strain CTCB07)).